Here is a 916-residue protein sequence, read N- to C-terminus: Chitin synthase B (916 aa).

2 disordered regions span residues 1–84 (MAYQ…AGFH) and 114–141 (SPYARSETSSTEAWRQRQAPGGGGGGGL). Asparagine 18 carries N-linked (GlcNAc...) asparagine glycosylation. Over residues 60–75 (RGTSPVRPTSGYSLTE) the composition is skewed to polar residues. Asparagine 546 is a glycosylation site (N-linked (GlcNAc...) asparagine). Helical transmembrane passes span 572-594 (MFFLHIQMLYNVFNTILTWFSLA), 628-648 (IINTIVKYVYLGLLLLQFILA), 663-683 (SFVVFGIIQIYVVVDALYLVV), 715-735 (IIIIALAATFGLYFVASFMYL), 743-763 (SFPAYMFVQSSYINVLNVYAF), 845-865 (LVTLWIFSNAFLAVCITSDGM), and 884-904 (ALLWSNAAVALVRFIGACWFL).

This sequence belongs to the chitin synthase family. Class III subfamily.

It is found in the cell membrane. The enzyme catalyses [(1-&gt;4)-N-acetyl-beta-D-glucosaminyl](n) + UDP-N-acetyl-alpha-D-glucosamine = [(1-&gt;4)-N-acetyl-beta-D-glucosaminyl](n+1) + UDP + H(+). Functionally, polymerizes chitin, a structural polymer of the cell wall and septum, by transferring the sugar moiety of UDP-GlcNAc to the non-reducing end of the growing chitin polymer. Involved in hyphal growth and more particularly in branching. This Aspergillus oryzae (strain ATCC 42149 / RIB 40) (Yellow koji mold) protein is Chitin synthase B.